Consider the following 156-residue polypeptide: MGRSISVSFGLLVVFLSLSGTGADFDCPSGWSAYDQHCYQAVDEPKSWADAEKFCTEQANGGHLVSIDSKKEANFVAELVSQNIKETRRTDFVWIGLRVEDKRQQCSSEWSDGSSINYQNWIEAESKKCLGLEKQTRYRKWVNLNCGQPYRFTCEI.

A signal peptide spans 1 to 23 (MGRSISVSFGLLVVFLSLSGTGA). 3 cysteine pairs are disulfide-bonded: Cys-27/Cys-38, Cys-55/Cys-154, and Cys-129/Cys-146. The C-type lectin domain occupies 34–155 (YDQHCYQAVD…CGQPYRFTCE (122 aa)).

This sequence belongs to the snaclec family. As to quaternary structure, heterodimer; disulfide-linked. In terms of tissue distribution, expressed by the venom gland.

It is found in the secreted. Its function is as follows. Interferes with one step of hemostasis (modulation of platelet aggregation, or coagulation cascade, for example). This chain is Snaclec A11, found in Macrovipera lebetinus (Levantine viper).